The primary structure comprises 106 residues: Large ribosomal subunit protein eL42 (106 aa).

The protein belongs to the eukaryotic ribosomal protein eL42 family.

It is found in the cytoplasm. This is Large ribosomal subunit protein eL42 (RPL44) from Trypanosoma brucei brucei.